We begin with the raw amino-acid sequence, 273 residues long: WIMGHMVNAIYQIDEFVNLGANSIETDVSFDDNANPEYTYHGIPCDCGRSCLKWENYNDFLKGLRSATTPGNSKYQSKLILVVFDLKTGSLYDNQASEAGKKLAKNLLKHYWNNGNNGGRAYIVLSIPDLNHYPLIKGFTDTLKQEGHPELLEKVGYDFSGNDAIGDVAKAYKKAGVSGHVWQSDGITNCLLRGLSRVKDAVANRDSGKGYINKVYYWTVDKRATTRDALDAGVDGVMTNYPDVIADVMNEAAYKNKVRLATYEDSPWVTFRK.

His-5 is an active-site residue. Positions 25 and 27 each coordinate Mg(2+). His-41 functions as the Nucleophile in the catalytic mechanism. Intrachain disulfides connect Cys-45–Cys-51 and Cys-47–Cys-190. Asp-85 serves as a coordination point for Mg(2+).

It belongs to the arthropod phospholipase D family. Class II subfamily. Mg(2+) serves as cofactor. In terms of tissue distribution, expressed by the venom gland.

The protein localises to the secreted. It catalyses the reaction an N-(acyl)-sphingosylphosphocholine = an N-(acyl)-sphingosyl-1,3-cyclic phosphate + choline. The catalysed reaction is an N-(acyl)-sphingosylphosphoethanolamine = an N-(acyl)-sphingosyl-1,3-cyclic phosphate + ethanolamine. It carries out the reaction a 1-acyl-sn-glycero-3-phosphocholine = a 1-acyl-sn-glycero-2,3-cyclic phosphate + choline. The enzyme catalyses a 1-acyl-sn-glycero-3-phosphoethanolamine = a 1-acyl-sn-glycero-2,3-cyclic phosphate + ethanolamine. Functionally, dermonecrotic toxins cleave the phosphodiester linkage between the phosphate and headgroup of certain phospholipids (sphingolipid and lysolipid substrates), forming an alcohol (often choline) and a cyclic phosphate. This toxin acts on sphingomyelin (SM). It may also act on ceramide phosphoethanolamine (CPE), lysophosphatidylcholine (LPC) and lysophosphatidylethanolamine (LPE), but not on lysophosphatidylserine (LPS), and lysophosphatidylglycerol (LPG). It acts by transphosphatidylation, releasing exclusively cyclic phosphate products as second products. Induces dermonecrosis, hemolysis, increased vascular permeability, edema, inflammatory response, and platelet aggregation. The chain is Dermonecrotic toxin LhSicTox-alphaIA2biv from Loxosceles hirsuta (Recluse spider).